Reading from the N-terminus, the 527-residue chain is MTNQAAEVAKRRTFAIISHPDAGKTTITEKLLLMGKAIAVAGTVKSRKSDRHATSDWMEMEKQRGISITTSVMQFPYREHMINLLDTPGHEDFSEDTYRTLTAVDSALMVLDGGKGVEPRTIALMDVCRLRDTPIVSFINKLDRDIRDPIELLDEIEAVLKIKAAPITWPIGCYRDFKGVYHLTGDYIVVYTPGHGHERTEAKIIQKLDSDEARAHLGDQYDSFVEQLELVQGACHEFNQEEFINGQLTPVFFGTALGNFGVDHVLDAVVDWAPRPLGRVAHERTVEPVEEKFTGFVFKIQANMDPKHRDRIAFMRICSGKYEKGMKMRHVRLNKDLRIGDALTFFSSEREQLEEAFAGDIIGLHNHGTIQIGDTFTEGEALGFTGIPHFAPELFRRVRLKDPLKSKQLRQGLQQLAEEGATQVFFPERSNDIILGAVGVLQFDVVASRLKEEYKVECAYEPITVWSARWISCDDKKKLEEFQTKAMENLAIDGGGHLTYLAPTRVNLALMEERWPDIKFRATREHH.

A tr-type G domain is found at 9-277 (AKRRTFAIIS…AVVDWAPRPL (269 aa)). GTP is bound by residues 18–25 (SHPDAGKT), 86–90 (DTPGH), and 140–143 (NKLD).

It belongs to the TRAFAC class translation factor GTPase superfamily. Classic translation factor GTPase family. PrfC subfamily.

The protein resides in the cytoplasm. Increases the formation of ribosomal termination complexes and stimulates activities of RF-1 and RF-2. It binds guanine nucleotides and has strong preference for UGA stop codons. It may interact directly with the ribosome. The stimulation of RF-1 and RF-2 is significantly reduced by GTP and GDP, but not by GMP. In Pseudomonas putida (strain ATCC 47054 / DSM 6125 / CFBP 8728 / NCIMB 11950 / KT2440), this protein is Peptide chain release factor 3.